Here is a 384-residue protein sequence, read N- to C-terminus: Protein V (384 aa).

Disordered regions lie at residues 1–23 (MDQDAFILKEDSEVEREAPGGRE) and 38–317 (SEPT…TKKG). Over residues 7-20 (ILKEDSEVEREAPG) the composition is skewed to basic and acidic residues. A compositionally biased stretch (polar residues) spans 50–59 (LHNTINTPQG). Phosphoserine; by host is present on Ser68. Basic and acidic residues predominate over residues 83 to 101 (RSGEESRVSGRTSKPEAEA). Ser125 carries the phosphoserine; by host modification. Positions 150-168 (GIEDENREMAAHPDKRGED) are enriched in basic and acidic residues. Positions 191–206 (ASNNGRSMEPGSSHSA) are enriched in polar residues. Ser192, Ser249, Ser257, and Ser260 each carry phosphoserine; by host. Zn(2+) is bound by residues His318, Cys337, Cys341, Cys353, Cys355, Cys358, Cys362, and Cys365.

This sequence belongs to the paramyxoviruses V protein family. As to quaternary structure, interacts with host IFIH1/MDA5 and DHX58/LGP2. Interacts with host IRF3. Interacts with host RIGI regulatory protein (via CARDs domain) and host TRIM25 (via SPRY domain); these interactions prevent TRIM25-mediated ubiquitination of RIG-I and disrupts downstream RIG-I signaling.

The protein resides in the host cytoplasm. Functionally, plays an essential role in the inhibition of host immune response. Prevents the establishment of cellular antiviral state by blocking interferon-alpha/beta (IFN-alpha/beta) production and signaling pathway. Interacts with host IFIH1/MDA5 and DHX58/LGP2 to inhibit the transduction pathway involved in the activation of IFN-beta promoter, thus protecting the virus against cell antiviral state. Also interacts with and inhibits host IRF3. Blocks the type I interferon signaling pathway by disrupting the RIG-I signaling pathway. In Sendai virus (strain Z) (SeV), this protein is Protein V (P/V/C).